The primary structure comprises 176 residues: ATP-dependent protease subunit HslV (176 aa).

Thr-4 is a catalytic residue. The Na(+) site is built by Ala-159, Cys-162, and Thr-165.

The protein belongs to the peptidase T1B family. HslV subfamily. In terms of assembly, a double ring-shaped homohexamer of HslV is capped on each side by a ring-shaped HslU homohexamer. The assembly of the HslU/HslV complex is dependent on binding of ATP.

It localises to the cytoplasm. The catalysed reaction is ATP-dependent cleavage of peptide bonds with broad specificity.. With respect to regulation, allosterically activated by HslU binding. Its function is as follows. Protease subunit of a proteasome-like degradation complex believed to be a general protein degrading machinery. The polypeptide is ATP-dependent protease subunit HslV (Wolbachia sp. subsp. Brugia malayi (strain TRS)).